Here is a 404-residue protein sequence, read N- to C-terminus: Multidrug resistance protein MdtG (404 aa).

The next 11 membrane-spanning stretches (helical) occupy residues 19 to 39 (LGCF…PLYV), 56 to 76 (LVFS…GGLA), 90 to 110 (LGMA…QFLI), 113 to 133 (ALLG…ATQA), 144 to 164 (TLST…GLLA), 171 to 191 (PVFF…FFFI), 222 to 242 (LFVT…ILTL), 254 to 274 (IAFI…LSAP), 288 to 308 (ILIV…FVQT), 317 to 337 (FLLG…LVYN), and 376 to 396 (AVFC…WNSL).

This sequence belongs to the major facilitator superfamily. DHA1 family. MdtG (TC 2.A.1.2.20) subfamily.

The protein localises to the cell inner membrane. This is Multidrug resistance protein MdtG from Salmonella paratyphi A (strain ATCC 9150 / SARB42).